Consider the following 396-residue polypeptide: 1-deoxy-D-xylulose 5-phosphate reductoisomerase (396 aa).

The NADPH site is built by Thr-10, Gly-11, Ser-12, Ile-13, Gly-36, Lys-37, Asn-38, and Asn-124. Lys-125 is a 1-deoxy-D-xylulose 5-phosphate binding site. Glu-126 serves as a coordination point for NADPH. Position 150 (Asp-150) interacts with Mn(2+). 4 residues coordinate 1-deoxy-D-xylulose 5-phosphate: Ser-151, Glu-152, Ser-186, and His-209. Glu-152 provides a ligand contact to Mn(2+). Residue Gly-215 participates in NADPH binding. Residues Ser-222, Asn-227, Lys-228, and Glu-231 each coordinate 1-deoxy-D-xylulose 5-phosphate. Glu-231 serves as a coordination point for Mn(2+).

Belongs to the DXR family. The cofactor is Mg(2+). Requires Mn(2+) as cofactor.

It carries out the reaction 2-C-methyl-D-erythritol 4-phosphate + NADP(+) = 1-deoxy-D-xylulose 5-phosphate + NADPH + H(+). The protein operates within isoprenoid biosynthesis; isopentenyl diphosphate biosynthesis via DXP pathway; isopentenyl diphosphate from 1-deoxy-D-xylulose 5-phosphate: step 1/6. In terms of biological role, catalyzes the NADPH-dependent rearrangement and reduction of 1-deoxy-D-xylulose-5-phosphate (DXP) to 2-C-methyl-D-erythritol 4-phosphate (MEP). This Actinobacillus pleuropneumoniae serotype 5b (strain L20) protein is 1-deoxy-D-xylulose 5-phosphate reductoisomerase.